Consider the following 276-residue polypeptide: Rhomboid protease GlpG (276 aa).

6 helical membrane passes run Gly94–Ile114, Ile142–Gly162, Leu169–Gln189, Phe192–Trp212, Leu229–Met249, and Ala250–Leu270. Residue Ser201 is the Nucleophile of the active site. His254 is a catalytic residue.

The protein belongs to the peptidase S54 family.

The protein localises to the cell inner membrane. It carries out the reaction Cleaves type-1 transmembrane domains using a catalytic dyad composed of serine and histidine that are contributed by different transmembrane domains.. Rhomboid-type serine protease that catalyzes intramembrane proteolysis. The chain is Rhomboid protease GlpG from Salmonella dublin (strain CT_02021853).